A 377-amino-acid polypeptide reads, in one-letter code: UDP-N,N'-diacetylbacillosamine 2-epimerase (hydrolyzing) (377 aa).

It belongs to the UDP-N-acetylglucosamine 2-epimerase family.

The enzyme catalyses UDP-N,N'-diacetylbacillosamine + H2O = 2,4-diacetamido-2,4,6-trideoxy-alpha-D-mannopyranose + UDP + H(+). In terms of biological role, involved in biosynthesis of legionaminic acid (5,7-diamino-3,5,7,9-tetradeoxy-D-glycero-D-galacto-non-2-ulosonic acid)(Leg), a sialic acid-like derivative that is incorporated into virulence-associated cell surface glycoconjugates such as lipopolysaccharide (LPS) which could be a key determinant in the ability of L.pneumophila to inhibit the fusion of phagosomes with lysosomes. LPS contains a majority alpha2,4-linked homomer of legionaminic acid. Catalyzes the conversion of UDP-N,N'-diacetylbacillosamine (Bac2Ac4Ac) into 2,4-diacetamido-2,4,6-trideoxymannose and UDP. The protein is UDP-N,N'-diacetylbacillosamine 2-epimerase (hydrolyzing) of Legionella pneumophila subsp. pneumophila (strain Philadelphia 1 / ATCC 33152 / DSM 7513).